The sequence spans 557 residues: Copine-6 (557 aa).

2 consecutive C2 domains span residues 2 to 127 (SDPE…TKPL) and 134 to 263 (TAGK…MQWD). Positions 167, 173, 229, 231, and 237 each coordinate Ca(2+). A linker region region spans residues 244 to 303 (STFQEMQEGTANPGQEMQWDCINPKYRDKKKNYKSSGTVVLAQCTVEKVHTFLDYIMGGC). Residues 306-526 (SFTVAIDFTA…ALAKCVLAEV (221 aa)) form the VWFA domain.

Belongs to the copine family. Interacts (via second C2 domain) with OS9 (via C-terminus); this interaction occurs in a calcium-dependent manner in vitro. May interact with NECAB1. The cofactor is Ca(2+). As to expression, widely expressed in the brain. Expressed weakly in the kidney, liver and fetal heart. Expressed in melanocytes.

The protein resides in the cytoplasm. The protein localises to the cell membrane. Its subcellular location is the endosome. It localises to the cytoplasmic vesicle. It is found in the clathrin-coated vesicle. The protein resides in the perikaryon. The protein localises to the cell projection. Its subcellular location is the dendrite. Functionally, calcium-dependent phospholipid-binding protein that plays a role in calcium-mediated intracellular processes. Binds phospholipid membranes in a calcium-dependent manner. Plays a role in dendrite formation by melanocytes. In Homo sapiens (Human), this protein is Copine-6.